The chain runs to 194 residues: Imidazole glycerol phosphate synthase subunit HisH (194 aa).

The 194-residue stretch at 1–194 (MIIIDTGCAN…QLLKNFVENL (194 aa)) folds into the Glutamine amidotransferase type-1 domain. Cys-75 functions as the Nucleophile in the catalytic mechanism. Catalysis depends on residues His-175 and Glu-177.

In terms of assembly, heterodimer of HisH and HisF.

The protein resides in the cytoplasm. The catalysed reaction is 5-[(5-phospho-1-deoxy-D-ribulos-1-ylimino)methylamino]-1-(5-phospho-beta-D-ribosyl)imidazole-4-carboxamide + L-glutamine = D-erythro-1-(imidazol-4-yl)glycerol 3-phosphate + 5-amino-1-(5-phospho-beta-D-ribosyl)imidazole-4-carboxamide + L-glutamate + H(+). It catalyses the reaction L-glutamine + H2O = L-glutamate + NH4(+). The protein operates within amino-acid biosynthesis; L-histidine biosynthesis; L-histidine from 5-phospho-alpha-D-ribose 1-diphosphate: step 5/9. IGPS catalyzes the conversion of PRFAR and glutamine to IGP, AICAR and glutamate. The HisH subunit catalyzes the hydrolysis of glutamine to glutamate and ammonia as part of the synthesis of IGP and AICAR. The resulting ammonia molecule is channeled to the active site of HisF. The protein is Imidazole glycerol phosphate synthase subunit HisH of Mannheimia succiniciproducens (strain KCTC 0769BP / MBEL55E).